The sequence spans 355 residues: Alanine racemase (355 aa).

The active-site Proton acceptor; specific for D-alanine is the Lys34. N6-(pyridoxal phosphate)lysine is present on Lys34. Arg133 serves as a coordination point for substrate. The active-site Proton acceptor; specific for L-alanine is Tyr249. Met297 serves as a coordination point for substrate.

It belongs to the alanine racemase family. Pyridoxal 5'-phosphate serves as cofactor.

It catalyses the reaction L-alanine = D-alanine. Its pathway is amino-acid biosynthesis; D-alanine biosynthesis; D-alanine from L-alanine: step 1/1. Catalyzes the interconversion of L-alanine and D-alanine. May also act on other amino acids. This chain is Alanine racemase (alr), found in Rickettsia canadensis (strain McKiel).